A 201-amino-acid polypeptide reads, in one-letter code: LexA repressor (201 aa).

The segment at residues 28–48 (MRDIAAHLRISGTLGVSKHLT) is a DNA-binding region (H-T-H motif). Catalysis depends on for autocatalytic cleavage activity residues Ser-120 and Lys-157.

This sequence belongs to the peptidase S24 family. Homodimer.

The enzyme catalyses Hydrolysis of Ala-|-Gly bond in repressor LexA.. In terms of biological role, represses a number of genes involved in the response to DNA damage (SOS response), including recA and lexA. In the presence of single-stranded DNA, RecA interacts with LexA causing an autocatalytic cleavage which disrupts the DNA-binding part of LexA, leading to derepression of the SOS regulon and eventually DNA repair. This chain is LexA repressor, found in Geobacter metallireducens (strain ATCC 53774 / DSM 7210 / GS-15).